A 375-amino-acid polypeptide reads, in one-letter code: Serpin B5 (375 aa).

N-linked (GlcNAc...) asparagine glycans are attached at residues Asn-99, Asn-133, Asn-188, and Asn-361.

It belongs to the serpin family. Ov-serpin subfamily. Interacts with IRF6. Normal mammary epithelial cells.

It localises to the secreted. It is found in the extracellular space. Tumor suppressor. It blocks the growth, invasion, and metastatic properties of mammary tumors. As it does not undergo the S (stressed) to R (relaxed) conformational transition characteristic of active serpins, it exhibits no serine protease inhibitory activity. The polypeptide is Serpin B5 (SERPINB5) (Homo sapiens (Human)).